Consider the following 246-residue polypeptide: tRNA (guanine-N(1)-)-methyltransferase (246 aa).

S-adenosyl-L-methionine is bound by residues Gly-114 and 134 to 139; that span reads IGDYIL.

This sequence belongs to the RNA methyltransferase TrmD family. Homodimer.

Its subcellular location is the cytoplasm. It catalyses the reaction guanosine(37) in tRNA + S-adenosyl-L-methionine = N(1)-methylguanosine(37) in tRNA + S-adenosyl-L-homocysteine + H(+). Functionally, specifically methylates guanosine-37 in various tRNAs. This chain is tRNA (guanine-N(1)-)-methyltransferase, found in Coxiella burnetii (strain CbuG_Q212) (Coxiella burnetii (strain Q212)).